The sequence spans 228 residues: 2-C-methyl-D-erythritol 4-phosphate cytidylyltransferase (228 aa).

Belongs to the IspD/TarI cytidylyltransferase family. IspD subfamily.

It carries out the reaction 2-C-methyl-D-erythritol 4-phosphate + CTP + H(+) = 4-CDP-2-C-methyl-D-erythritol + diphosphate. The protein operates within isoprenoid biosynthesis; isopentenyl diphosphate biosynthesis via DXP pathway; isopentenyl diphosphate from 1-deoxy-D-xylulose 5-phosphate: step 2/6. Functionally, catalyzes the formation of 4-diphosphocytidyl-2-C-methyl-D-erythritol from CTP and 2-C-methyl-D-erythritol 4-phosphate (MEP). The protein is 2-C-methyl-D-erythritol 4-phosphate cytidylyltransferase of Geobacillus thermodenitrificans (strain NG80-2).